Reading from the N-terminus, the 253-residue chain is Tetraspanin-3 (253 aa).

Residues 1–11 (MGQCGITSSKT) are Cytoplasmic-facing. A helical membrane pass occupies residues 12–32 (VLVFLNLIFWGAAGILCYVGA). At 33-50 (YVFITYDDYDHFFEDVYT) the chain is on the extracellular side. A helical membrane pass occupies residues 51 to 71 (LFPAVVIIAVGALLFIIGLIG). At 72-85 (CCATIRESRCGLAT) the chain is on the cytoplasmic side. Residues 86–106 (FVFILLLVFVTEVVVVVLGYV) form a helical membrane-spanning segment. Residues 107-212 (YRAKVENEVD…KKLQEILMHV (106 aa)) are Extracellular-facing. N-linked (GlcNAc...) asparagine glycosylation is found at asparagine 127, asparagine 152, asparagine 167, and asparagine 183. The helical transmembrane segment at 213-233 (IWAALAFAAIQLLGMLCACIV) threads the bilayer. At 234 to 253 (LCRRSRDPAYELLITGGTYA) the chain is on the cytoplasmic side.

This sequence belongs to the tetraspanin (TM4SF) family. In terms of assembly, interacts with claudin-11/CLDN11 and integrins.

The protein resides in the membrane. Its function is as follows. Regulates the proliferation and migration of oligodendrocytes, a process essential for normal myelination and repair. The protein is Tetraspanin-3 (Tspan3) of Mus musculus (Mouse).